We begin with the raw amino-acid sequence, 600 residues long: Elongation factor 4 (600 aa).

The tr-type G domain maps to 5 to 187 (SHIRNFSIVA…ALVNRLPCPE (183 aa)). Residues 17–22 (DHGKST) and 134–137 (NKID) each bind GTP.

This sequence belongs to the TRAFAC class translation factor GTPase superfamily. Classic translation factor GTPase family. LepA subfamily.

It is found in the cell inner membrane. It catalyses the reaction GTP + H2O = GDP + phosphate + H(+). Its function is as follows. Required for accurate and efficient protein synthesis under certain stress conditions. May act as a fidelity factor of the translation reaction, by catalyzing a one-codon backward translocation of tRNAs on improperly translocated ribosomes. Back-translocation proceeds from a post-translocation (POST) complex to a pre-translocation (PRE) complex, thus giving elongation factor G a second chance to translocate the tRNAs correctly. Binds to ribosomes in a GTP-dependent manner. The sequence is that of Elongation factor 4 from Paramagnetospirillum magneticum (strain ATCC 700264 / AMB-1) (Magnetospirillum magneticum).